Reading from the N-terminus, the 383-residue chain is Retrovirus-related Pol polyprotein from type-1 retrotransposable element R1 3 (383 aa).

Positions 1-88 constitute a Reverse transcriptase domain; sequence VDAFADDLLL…DRVRYLGVNV (88 aa). Residues 229–383 are nucleic acid-binding endonuclease; the sequence is LSLHECRELV…VQRMRENEES (155 aa).

It carries out the reaction DNA(n) + a 2'-deoxyribonucleoside 5'-triphosphate = DNA(n+1) + diphosphate. This chain is Retrovirus-related Pol polyprotein from type-1 retrotransposable element R1 3, found in Nasonia vitripennis (Parasitic wasp).